The chain runs to 200 residues: Max dimerization protein 3 (200 aa).

2 disordered regions span residues 26-56 (EHGY…DNVR) and 134-164 (LLPP…QEDL). Positions 54–106 (NVRSVHNELEKHRRAQLRRCLEQLKQQVPLSMENSRHTTLSLLHRAKQHIKKL) constitute a bHLH domain.

Efficient DNA binding requires dimerization with another bHLH protein. Binds DNA as a heterodimer with MAX.

The protein resides in the nucleus. Its function is as follows. Transcriptional repressor. Binds with MAX to form a sequence-specific DNA-binding protein complex which recognizes the core sequence 5'-CAC[GA]TG-3'. This is Max dimerization protein 3 (mxd3) from Xenopus tropicalis (Western clawed frog).